The primary structure comprises 345 residues: Ubiquitin-associated domain-containing protein 2 (345 aa).

The first 35 residues, M1 to P35, serve as a signal peptide directing secretion. Over H36–K91 the chain is Extracellular. A helical membrane pass occupies residues F92 to E112. The Cytoplasmic segment spans residues A113 to N125. Residues L126–P146 form a helical membrane-spanning segment. Residues R147–T163 lie on the Extracellular side of the membrane. N161 carries an N-linked (GlcNAc...) asparagine glycan. The helical transmembrane segment at L164–I184 threads the bilayer. Residues S185–H345 lie on the Cytoplasmic side of the membrane. In terms of domain architecture, UBA spans E305–H345.

Interacts with LMBR1L, FAF2, AMFR and VCP.

Its subcellular location is the endoplasmic reticulum membrane. Functionally, restricts trafficking of FAF2 from the endoplasmic reticulum to lipid droplets. In association with LMBR1L and E3 ubiquitin-protein ligase AMFR, negatively regulates the canonical Wnt signaling pathway in the lymphocytes by promoting the ubiquitin-mediated degradation of CTNNB1 and Wnt receptors FZD6 and LRP6. The protein is Ubiquitin-associated domain-containing protein 2 (UBAC2) of Macaca fascicularis (Crab-eating macaque).